The sequence spans 688 residues: Lipase (688 aa).

Positions 1-35 (MKTRQNKYSIRKFSVGASSILIAALLFMGGGSAQA) are cleaved as a signal peptide. The segment at 31–309 (GSAQAAEQQQ…KSAKQKQYKN (279 aa)) is disordered. A propeptide spans 36-302 (AEQQQDKGTV…KNEDQTNKSA (267 aa)) (removed in mature form). A compositionally biased stretch (polar residues) spans 45–54 (VENSTTQSIG). The span at 68 to 79 (NKNVNEKSNVNS) shows a compositional bias: low complexity. Composition is skewed to basic and acidic residues over residues 84 to 95 (ESLHNETPKNED), 103 to 117 (SQND…EQNK), and 126 to 143 (HSEE…KHAS). Residues 144 to 172 (ENNQTLHSKAAQSNEDVKTKPSQLDNTAA) are compositionally biased toward polar residues. A compositionally biased stretch (basic and acidic residues) spans 173-183 (KQEDSQKENLS). Residues 184-211 (KQDTQSSKTTDLLRATAQNQSKDSQSTE) are compositionally biased toward polar residues. Over residues 240–267 (SKEEPLKVDKQANPTTDKDKSSKNDKGS) the composition is skewed to basic and acidic residues. Positions 274 to 289 (LESNAVATTNKQSKQQ) are enriched in polar residues. The active-site Nucleophile is serine 418. Aspartate 609 (charge relay system) is an active-site residue. Position 647 (aspartate 647) interacts with Ca(2+). The active-site Charge relay system is histidine 648. Positions 650, 655, and 658 each coordinate Ca(2+).

It belongs to the AB hydrolase superfamily. Lipase family.

It localises to the secreted. It carries out the reaction a triacylglycerol + H2O = a diacylglycerol + a fatty acid + H(+). This chain is Lipase (lip), found in Staphylococcus epidermidis.